A 536-amino-acid chain; its full sequence is Pentatricopeptide repeat-containing protein At2g06000 (536 aa).

PPR repeat units follow at residues 102 to 136 (SFWT…GVSP), 137 to 167 (NNRL…SFEV), 170 to 200 (CCMV…HLRF), 205 to 239 (DTKT…GCEP), 240 to 274 (DIVT…SVCS), 276 to 310 (DVVT…GIYP), 311 to 345 (TNVT…GCFP), 346 to 380 (DVVT…GMFP), 381 to 415 (NAFT…DIIP), 416 to 450 (QPFM…KCKP), 451 to 485 (DKIT…GCSP), and 486 to 523 (DKIT…NVVP).

The protein belongs to the PPR family. P subfamily.

This is Pentatricopeptide repeat-containing protein At2g06000 from Arabidopsis thaliana (Mouse-ear cress).